The chain runs to 175 residues: Protein-export protein SecB (175 aa).

This sequence belongs to the SecB family. In terms of assembly, homotetramer, a dimer of dimers. One homotetramer interacts with 1 SecA dimer.

It localises to the cytoplasm. In terms of biological role, one of the proteins required for the normal export of preproteins out of the cell cytoplasm. It is a molecular chaperone that binds to a subset of precursor proteins, maintaining them in a translocation-competent state. It also specifically binds to its receptor SecA. The sequence is that of Protein-export protein SecB from Ehrlichia chaffeensis (strain ATCC CRL-10679 / Arkansas).